An 83-amino-acid polypeptide reads, in one-letter code: NAD(P)H-quinone oxidoreductase subunit L, organellar chromatophore (83 aa).

Transmembrane regions (helical) follow at residues 17-37 (LLLA…LALY) and 53-73 (LFVY…SPFL).

Belongs to the complex I NdhL subunit family. As to quaternary structure, NDH-1 can be composed of about 15 different subunits; different subcomplexes with different compositions have been identified which probably have different functions.

It is found in the plastid. The protein resides in the organellar chromatophore thylakoid membrane. It catalyses the reaction a plastoquinone + NADH + (n+1) H(+)(in) = a plastoquinol + NAD(+) + n H(+)(out). It carries out the reaction a plastoquinone + NADPH + (n+1) H(+)(in) = a plastoquinol + NADP(+) + n H(+)(out). NDH-1 shuttles electrons from an unknown electron donor, via FMN and iron-sulfur (Fe-S) centers, to quinones in the respiratory and/or the photosynthetic chain. The immediate electron acceptor for the enzyme in this species is believed to be plastoquinone. Couples the redox reaction to proton translocation, and thus conserves the redox energy in a proton gradient. This Paulinella chromatophora protein is NAD(P)H-quinone oxidoreductase subunit L, organellar chromatophore.